We begin with the raw amino-acid sequence, 391 residues long: Processive diacylglycerol beta-glucosyltransferase (391 aa).

It belongs to the glycosyltransferase 28 family. UgtP subfamily.

Its subcellular location is the cell membrane. It catalyses the reaction a 1,2-diacyl-3-O-(beta-D-glucopyranosyl)-sn-glycerol + UDP-alpha-D-glucose = a 1,2-diacyl-3-O-(beta-D-Glc-(1-&gt;6)-beta-D-Glc)-sn-glycerol + UDP + H(+). The enzyme catalyses a 1,2-diacyl-sn-glycerol + UDP-alpha-D-glucose = a 1,2-diacyl-3-O-(beta-D-glucopyranosyl)-sn-glycerol + UDP + H(+). It participates in glycolipid metabolism; diglucosyl-diacylglycerol biosynthesis. Processive glucosyltransferase involved in the biosynthesis of both the bilayer- and non-bilayer-forming membrane glucolipids. Is able to successively transfer two glucosyl residues to diacylglycerol (DAG), thereby catalyzing the formation of beta-monoglucosyl-DAG (3-O-(beta-D-glucopyranosyl)-1,2-diacyl-sn-glycerol) and beta-diglucosyl-DAG (3-O-(beta-D-glucopyranosyl-beta-(1-&gt;6)-D-glucopyranosyl)-1,2-diacyl-sn-glycerol). Beta-diglucosyl-DAG is the predominant glycolipid found in Bacillales and is also used as a membrane anchor for lipoteichoic acid (LTA). In Staphylococcus epidermidis (strain ATCC 35984 / DSM 28319 / BCRC 17069 / CCUG 31568 / BM 3577 / RP62A), this protein is Processive diacylglycerol beta-glucosyltransferase.